A 119-amino-acid chain; its full sequence is Small polypeptide DEVIL 24 (119 aa).

The tract at residues serine 83–threonine 114 is required for DVL/RTFL small polypeptide activity. A helical transmembrane segment spans residues histidine 96–tyrosine 113.

Belongs to the DVL/RTFL small polypeptides family.

The protein localises to the cell membrane. Its function is as follows. Small polypeptide acting as a regulatory molecule which coordinates cellular responses required for differentiation, growth and development, probably by restricting polar cell proliferation in lateral organs and coordinating socket cell recruitment and differentiation at trichome sites. The chain is Small polypeptide DEVIL 24 from Arabidopsis thaliana (Mouse-ear cress).